Reading from the N-terminus, the 815-residue chain is Serotype-specific mannosyltransferase WbdA (815 aa).

Positions 1–374 (MSRAIIENAG…WANTAHLAIE (374 aa)) are alpha-(1-&gt;2)-mannosyltransferase. The segment at 431–804 (KLLVDISVLA…WKQSAEFLLK (374 aa)) is alpha-(1-&gt;3)-mannosyltransferase.

It belongs to the glycosyltransferase group 1 family. Glycosyltransferase 4 subfamily. As to quaternary structure, monomer. Interacts with the C-terminal region of WbdD.

It is found in the cell inner membrane. It carries out the reaction [alpha-D-Man-(1-&gt;3)-alpha-D-Man-(1-&gt;3)-alpha-D-Man-(1-&gt;2)-alpha-D-Man-(1-&gt;2)](n)-alpha-D-Man-(1-&gt;3)-alpha-D-Man-(1-&gt;3)-alpha-D-Man-(1-&gt;3)-alpha-D-GlcNAc-di-trans,octa-cis-undecaprenyl diphosphate + 2 GDP-alpha-D-mannose = alpha-D-Man-(1-&gt;2)-alpha-D-Man-(1-&gt;2)-[alpha-D-Man-(1-&gt;3)-alpha-D-Man-(1-&gt;3)-alpha-D-Man-(1-&gt;2)-alpha-D-Man-(1-&gt;2)](n)-alpha-D-Man-(1-&gt;3)-alpha-D-Man-(1-&gt;3)-alpha-D-Man-(1-&gt;3)-alpha-D-GlcNAc-di-trans,octa-cis-undecaprenyl diphosphate + 2 GDP + 2 H(+). The catalysed reaction is alpha-D-Man-(1-&gt;2)-alpha-D-Man-(1-&gt;2)-[alpha-D-Man-(1-&gt;3)-alpha-D-Man-(1-&gt;3)-alpha-D-Man-(1-&gt;2)-alpha-D-Man-(1-&gt;2)](n)-alpha-D-Man-(1-&gt;3)-alpha-D-Man-(1-&gt;3)-alpha-D-Man-(1-&gt;3)-alpha-D-GlcNAc-di-trans,octa-cis-undecaprenyl diphosphate + 2 GDP-alpha-D-mannose = [alpha-D-Man-(1-&gt;3)-alpha-D-Man-(1-&gt;3)-alpha-D-Man-(1-&gt;2)-alpha-D-Man-(1-&gt;2)](n+1)-alpha-D-Man-(1-&gt;3)-alpha-D-Man-(1-&gt;3)-alpha-D-Man-(1-&gt;3)-alpha-D-GlcNAc-di-trans,octa-cis-undecaprenyl diphosphate + 2 GDP + 2 H(+). Its pathway is bacterial outer membrane biogenesis; LPS O-antigen biosynthesis. Mannosyltransferase involved in the biosynthesis of the repeat unit of the lipopolysaccharide (LPS) O-antigen region. Catalyzes the polymerization of a tetrasaccharide repeat unit containing two alpha-(1-&gt;3)- and two alpha-(1-&gt;2)-linked mannopyranose residues. This is Serotype-specific mannosyltransferase WbdA from Escherichia coli.